The primary structure comprises 468 residues: Glutamate--tRNA ligase (468 aa).

The 'HIGH' region signature appears at 8-18 (PSPTGFLHVGG). Cys-97, Cys-99, Cys-124, and Asp-126 together coordinate Zn(2+). A 'KMSKS' region motif is present at residues 236–240 (KLSKR). Lys-239 provides a ligand contact to ATP.

The protein belongs to the class-I aminoacyl-tRNA synthetase family. Glutamate--tRNA ligase type 1 subfamily. Monomer. The cofactor is Zn(2+).

Its subcellular location is the cytoplasm. The catalysed reaction is tRNA(Glu) + L-glutamate + ATP = L-glutamyl-tRNA(Glu) + AMP + diphosphate. Functionally, catalyzes the attachment of glutamate to tRNA(Glu) in a two-step reaction: glutamate is first activated by ATP to form Glu-AMP and then transferred to the acceptor end of tRNA(Glu). In Francisella tularensis subsp. holarctica (strain FTNF002-00 / FTA), this protein is Glutamate--tRNA ligase.